A 601-amino-acid polypeptide reads, in one-letter code: Elongation factor 4 (601 aa).

The tr-type G domain maps to 5–188; that stretch reads SHIRNFAIIA…ALVLRLPPPT (184 aa). GTP-binding positions include 17 to 22 and 135 to 138; these read DHGKST and NKID.

The protein belongs to the TRAFAC class translation factor GTPase superfamily. Classic translation factor GTPase family. LepA subfamily.

The protein localises to the cell inner membrane. The catalysed reaction is GTP + H2O = GDP + phosphate + H(+). Its function is as follows. Required for accurate and efficient protein synthesis under certain stress conditions. May act as a fidelity factor of the translation reaction, by catalyzing a one-codon backward translocation of tRNAs on improperly translocated ribosomes. Back-translocation proceeds from a post-translocation (POST) complex to a pre-translocation (PRE) complex, thus giving elongation factor G a second chance to translocate the tRNAs correctly. Binds to ribosomes in a GTP-dependent manner. This chain is Elongation factor 4, found in Rhodospirillum rubrum (strain ATCC 11170 / ATH 1.1.1 / DSM 467 / LMG 4362 / NCIMB 8255 / S1).